A 194-amino-acid chain; its full sequence is dTTP/UTP pyrophosphatase (194 aa).

The active-site Proton acceptor is Asp-73.

It belongs to the Maf family. YhdE subfamily. A divalent metal cation is required as a cofactor.

It is found in the cytoplasm. The enzyme catalyses dTTP + H2O = dTMP + diphosphate + H(+). It catalyses the reaction UTP + H2O = UMP + diphosphate + H(+). In terms of biological role, nucleoside triphosphate pyrophosphatase that hydrolyzes dTTP and UTP. May have a dual role in cell division arrest and in preventing the incorporation of modified nucleotides into cellular nucleic acids. This Geotalea uraniireducens (strain Rf4) (Geobacter uraniireducens) protein is dTTP/UTP pyrophosphatase.